Consider the following 359-residue polypeptide: Mitochondrial glutathione transporter SLC25A39 (359 aa).

The Mitochondrial intermembrane segment spans residues 1-14 (MDDQDPGGISPLQQ). Solcar repeat units lie at residues 9-151 (ISPL…LKAF), 159-243 (SDLY…VKSW), and 253-347 (TSVG…GKSF). A helical transmembrane segment spans residues 15–35 (MVASGAGAVVTSLFMTPLDVV). At 36-121 (KVRLQSQRPS…VKIVRHEGTR (86 aa)) the chain is on the mitochondrial matrix side. The [2Fe-2S] cluster site is built by C74, C78, C88, and C94. Residues 122 to 142 (TLWSGLPATLVMTVPATAIYF) form a helical membrane-spanning segment. Residues 143–164 (TAYDQLKAFLCGQSLTSDLYAP) lie on the Mitochondrial intermembrane side of the membrane. The helical transmembrane segment at 165–185 (MVAGALARMGTVTVVSPLELV) threads the bilayer. The Mitochondrial matrix segment spans residues 186 to 214 (RTKLQAQHVSYRELASSVQAAVTQGGWRS). Residues 215 to 235 (LWLGWGPTALRDVPFSALYWF) form a helical membrane-spanning segment. Over 236–255 (NYELVKSWLSGLRPKDQTSV) the chain is Mitochondrial intermembrane. A helical membrane pass occupies residues 256 to 276 (GISFVAGGISGMVAATLTLPF). Residues 277-317 (DVVKTQRQMSLGAVEAVRVKPPRVDSTWLLLRRIRAESGTR) are Mitochondrial matrix-facing. Residues 318-338 (GLFAGFLPRIIKAAPSCAIMI) form a helical membrane-spanning segment. The Mitochondrial intermembrane portion of the chain corresponds to 339 to 359 (STYEFGKSFFQRLNQEQPLGR).

Belongs to the mitochondrial carrier (TC 2.A.29) family. Post-translationally, cleaved and degraded by AFG3L2; degradation by AFG3L2 is regulated by the ability of SLC25A39 to bind iron-sulfur. In absence of mitochondrial glutathione, SLC25A39 binds iron-sulfur, preventing cleavage and degradation by AFG3L2. The presence of mitochondrial glutathione prevents iron-sulfur-binding to SLC25A39, promoting cleavage and degradation by AFG3L2. Abundant expression in bone marrow, spleen, testis and kidney.

It is found in the mitochondrion inner membrane. The enzyme catalyses glutathione(in) = glutathione(out). With respect to regulation, the activity of SLC25A39 is regulated by levels of mitochondrial glutathione via its ability to bind [2Fe-2S] iron-sulfur cluster. Upon physiological levels of mitochondrial glutathione, glutathione prevents iron-sulfur-binding to SLC25A39 promoting cleavage and degradation by AFG3L2. Upon depletion of mitochondrial glutathione, SLC25A39 binds iron-sulfur, preventing cleavage and degradation by AFG3L2. Its function is as follows. Mitochondrial transporter required for glutathione import into mitochondria. Glutathione, which plays key roles in oxidative metabolism, is produced exclusively in the cytosol and is imported in many organelles. Mitochondrial glutathione is required for the activity and stability of proteins containing iron-sulfur clusters, as well as erythropoiesis. This chain is Mitochondrial glutathione transporter SLC25A39, found in Mus musculus (Mouse).